A 103-amino-acid polypeptide reads, in one-letter code: Nucleoid-associated protein CFF8240_0066 (103 aa).

This sequence belongs to the YbaB/EbfC family. Homodimer.

It localises to the cytoplasm. The protein resides in the nucleoid. Binds to DNA and alters its conformation. May be involved in regulation of gene expression, nucleoid organization and DNA protection. The protein is Nucleoid-associated protein CFF8240_0066 of Campylobacter fetus subsp. fetus (strain 82-40).